The primary structure comprises 310 residues: Formimidoylglutamase (310 aa).

Positions 120, 148, 150, 152, 233, and 235 each coordinate Mn(2+).

This sequence belongs to the arginase family. Requires Mn(2+) as cofactor.

The enzyme catalyses N-formimidoyl-L-glutamate + H2O = formamide + L-glutamate. The protein operates within amino-acid degradation; L-histidine degradation into L-glutamate; L-glutamate from N-formimidoyl-L-glutamate (hydrolase route): step 1/1. Its function is as follows. Catalyzes the conversion of N-formimidoyl-L-glutamate to L-glutamate and formamide. The polypeptide is Formimidoylglutamase (Nocardia farcinica (strain IFM 10152)).